Reading from the N-terminus, the 885-residue chain is DNA mismatch repair protein MutS (885 aa).

An ATP-binding site is contributed by 640 to 647 (GPNMGGKS).

Belongs to the DNA mismatch repair MutS family.

In terms of biological role, this protein is involved in the repair of mismatches in DNA. It is possible that it carries out the mismatch recognition step. This protein has a weak ATPase activity. The polypeptide is DNA mismatch repair protein MutS (Variovorax paradoxus (strain S110)).